A 129-amino-acid polypeptide reads, in one-letter code: QFQKPGDAIEYRQSAFTLIANHFGRVAAMAQGKAPFDAKVAAENIALVSTLSKLPLTAFGPGTDKGHGTEAKPAVWSDAAGFKAAADKFAAAVDKLDAAGKTGDFAQIKAAVGETGGACKGCHDKFKEK.

The heme c site is built by Arg12, Gln13, Thr69, Glu70, Cys119, Cys122, and His123.

In terms of processing, binds 1 heme c group covalently per subunit.

Cytochrome c' is the most widely occurring bacterial c-type cytochrome. Cytochromes c' are high-spin proteins and the heme has no sixth ligand. Their exact function is not known. The protein is Cytochrome c' of Rubrivivax gelatinosus (Rhodocyclus gelatinosus).